The primary structure comprises 298 residues: 4-hydroxy-tetrahydrodipicolinate synthase (298 aa).

Position 51 (T51) interacts with pyruvate. Y139 serves as the catalytic Proton donor/acceptor. The active-site Schiff-base intermediate with substrate is the K167. I209 provides a ligand contact to pyruvate.

This sequence belongs to the DapA family. Homotetramer; dimer of dimers.

It localises to the cytoplasm. It catalyses the reaction L-aspartate 4-semialdehyde + pyruvate = (2S,4S)-4-hydroxy-2,3,4,5-tetrahydrodipicolinate + H2O + H(+). The protein operates within amino-acid biosynthesis; L-lysine biosynthesis via DAP pathway; (S)-tetrahydrodipicolinate from L-aspartate: step 3/4. Its function is as follows. Catalyzes the condensation of (S)-aspartate-beta-semialdehyde [(S)-ASA] and pyruvate to 4-hydroxy-tetrahydrodipicolinate (HTPA). The sequence is that of 4-hydroxy-tetrahydrodipicolinate synthase from Pasteurella multocida (strain Pm70).